We begin with the raw amino-acid sequence, 116 residues long: Flagellar hook-basal body complex protein FliE (116 aa).

The protein belongs to the FliE family.

It localises to the bacterial flagellum basal body. This is Flagellar hook-basal body complex protein FliE from Rhizobium rhizogenes (strain K84 / ATCC BAA-868) (Agrobacterium radiobacter).